Consider the following 182-residue polypeptide: 3-hydroxyanthranilate 3,4-dioxygenase (182 aa).

Arg-46 contributes to the O2 binding site. Residues His-50, Glu-56, and His-96 each coordinate Fe cation. Glu-56 contacts substrate. Positions 100 and 111 each coordinate substrate. Residues Cys-126, Cys-129, Cys-163, and Cys-166 each contribute to the Fe cation site.

Belongs to the 3-HAO family. As to quaternary structure, homodimer. Fe(2+) serves as cofactor.

It carries out the reaction 3-hydroxyanthranilate + O2 = (2Z,4Z)-2-amino-3-carboxymuconate 6-semialdehyde. It participates in cofactor biosynthesis; NAD(+) biosynthesis; quinolinate from L-kynurenine: step 3/3. Functionally, catalyzes the oxidative ring opening of 3-hydroxyanthranilate to 2-amino-3-carboxymuconate semialdehyde, which spontaneously cyclizes to quinolinate. This is 3-hydroxyanthranilate 3,4-dioxygenase from Brucella anthropi (strain ATCC 49188 / DSM 6882 / CCUG 24695 / JCM 21032 / LMG 3331 / NBRC 15819 / NCTC 12168 / Alc 37) (Ochrobactrum anthropi).